Consider the following 345-residue polypeptide: Tropomodulin-4 (345 aa).

Disordered regions lie at residues 40–64 (PENMLLPAGLRQRDQTKKSPTGPLD) and 326–345 (ARAAHAMTRNNELRRQQKKR). A compositionally biased stretch (basic and acidic residues) spans 336 to 345 (NELRRQQKKR).

It belongs to the tropomodulin family. Binds to the N-terminus of tropomyosin and to actin.

It localises to the cytoplasm. The protein localises to the cytoskeleton. Its function is as follows. Blocks the elongation and depolymerization of the actin filaments at the pointed end. The Tmod/TM complex contributes to the formation of the short actin protofilament, which in turn defines the geometry of the membrane skeleton. This Mus musculus (Mouse) protein is Tropomodulin-4 (Tmod4).